A 72-amino-acid polypeptide reads, in one-letter code: UPF0352 protein Patl_3379 (72 aa).

This sequence belongs to the UPF0352 family.

The polypeptide is UPF0352 protein Patl_3379 (Pseudoalteromonas atlantica (strain T6c / ATCC BAA-1087)).